The following is a 272-amino-acid chain: MKKLTSILSLIVLVILAIWQYFTDTTKTKHQSSSPVIEQTKQTKVSEPKFEPKFEPKFEPKFEPQFETKRTDIEKSAVKNPDVFANYDVIMRNDHIGQNAKAPVDYYMLALSWSPGFCDIQREKYGDQLPYSSQYQCGNNRTFGWVVHGLWPQNANARAVSDHPRFCKGDLPALPKGLLAQYLAISPGEKLLQGEWEKHGSCAFDSAQQYFAKEQELFNALKLPNQKLSRDELFGWMKQHNPQLKNAYLRASRNELFICYDKKWQVMNCQSK.

The N-terminal stretch at 1–23 (MKKLTSILSLIVLVILAIWQYFT) is a signal peptide. Active-site residues include H148, E195, and H199.

The protein belongs to the RNase T2 family.

In Haemophilus influenzae (strain ATCC 51907 / DSM 11121 / KW20 / Rd), this protein is Probable ribonuclease HI_0526.